The sequence spans 339 residues: Phenylalanine--tRNA ligase alpha subunit (339 aa).

Mg(2+) is bound at residue glutamate 253.

This sequence belongs to the class-II aminoacyl-tRNA synthetase family. Phe-tRNA synthetase alpha subunit type 1 subfamily. In terms of assembly, tetramer of two alpha and two beta subunits. Requires Mg(2+) as cofactor.

It localises to the cytoplasm. It carries out the reaction tRNA(Phe) + L-phenylalanine + ATP = L-phenylalanyl-tRNA(Phe) + AMP + diphosphate + H(+). This Alcanivorax borkumensis (strain ATCC 700651 / DSM 11573 / NCIMB 13689 / SK2) protein is Phenylalanine--tRNA ligase alpha subunit.